The following is a 442-amino-acid chain: UDP-glucosyltransferase 29 (442 aa).

H20 (proton acceptor) is an active-site residue. An anthocyanidin is bound at residue H20. The active-site Charge relay is the D116. The UDP-alpha-D-glucose site is built by T138, A318, Q320, H335, W338, S340, E343, D359, and Q360.

This sequence belongs to the UDP-glycosyltransferase family. As to expression, expressed at higher levels in roots than in leaves.

The enzyme catalyses (20S)-ginsenoside F2 + UDP-alpha-D-glucose = (20S)-ginsenoside Rd + UDP + H(+). The catalysed reaction is (20S)-ginsenoside Rh2 + UDP-alpha-D-glucose = (20S)-ginsenoside Rg3 + UDP + H(+). Its pathway is secondary metabolite biosynthesis; terpenoid biosynthesis. In terms of biological role, component of the dammarane-type triterpene saponins (e.g. PPD-type ginsenosides or panaxosides) biosynthetic pathway. Glycosyltransferase that catalyzes the conversion of ginsenoside Rh2 to ginsenoside Rg3. Triggers the biosynthesis of ginsenoside Rd from ginsenoside F2. In Panax ginseng (Korean ginseng), this protein is UDP-glucosyltransferase 29.